The following is a 187-amino-acid chain: Protein ECM23 (187 aa).

Disordered stretches follow at residues 106-127 (GKKSLAGYRPKSRKKQTILPNG) and 167-187 (KKIRSQQSSDDGTKNFIFKNK). The GATA-type zinc-finger motif lies at 126-180 (NGQPKECATCGDTWTSQWRSGPNGNVELCSRCGIAYRKKMEKKIRSQQSSDDGTK).

Functionally, involved in morphogenesis. May be involved in cell wall organization and biogenesis. The polypeptide is Protein ECM23 (ECM23) (Saccharomyces cerevisiae (strain ATCC 204508 / S288c) (Baker's yeast)).